Reading from the N-terminus, the 446-residue chain is Glutamyl-tRNA reductase (446 aa).

Substrate is bound by residues 49-52 (TCNR), Ser109, 114-116 (ETQ), and Gln120. The active-site Nucleophile is Cys50. 189 to 194 (GAGEMA) is an NADP(+) binding site.

This sequence belongs to the glutamyl-tRNA reductase family. In terms of assembly, homodimer.

The enzyme catalyses (S)-4-amino-5-oxopentanoate + tRNA(Glu) + NADP(+) = L-glutamyl-tRNA(Glu) + NADPH + H(+). It participates in porphyrin-containing compound metabolism; protoporphyrin-IX biosynthesis; 5-aminolevulinate from L-glutamyl-tRNA(Glu): step 1/2. Its function is as follows. Catalyzes the NADPH-dependent reduction of glutamyl-tRNA(Glu) to glutamate 1-semialdehyde (GSA). The chain is Glutamyl-tRNA reductase from Macrococcus caseolyticus (strain JCSC5402) (Macrococcoides caseolyticum).